A 101-amino-acid polypeptide reads, in one-letter code: Large ribosomal subunit protein uL6m (101 aa).

This sequence belongs to the universal ribosomal protein uL6 family.

The protein resides in the mitochondrion. This is Large ribosomal subunit protein uL6m (RPL6) from Marchantia polymorpha (Common liverwort).